Consider the following 433-residue polypeptide: Pyrimidine-nucleoside phosphorylase (433 aa).

81–83 is a phosphate binding site; it reads KHS. K(+) is bound by residues Gly-88 and Thr-90. Residues Thr-92, 108–110, and Thr-120 contribute to the phosphate site; that span reads KMS. Residues Arg-168 and Lys-187 each coordinate substrate. Leu-243, Ala-246, and Glu-255 together coordinate K(+).

This sequence belongs to the thymidine/pyrimidine-nucleoside phosphorylase family. As to quaternary structure, homodimer. Requires K(+) as cofactor.

It catalyses the reaction uridine + phosphate = alpha-D-ribose 1-phosphate + uracil. The catalysed reaction is thymidine + phosphate = 2-deoxy-alpha-D-ribose 1-phosphate + thymine. The enzyme catalyses 2'-deoxyuridine + phosphate = 2-deoxy-alpha-D-ribose 1-phosphate + uracil. Catalyzes phosphorolysis of the pyrimidine nucleosides uridine, thymidine and 2'-deoxyuridine with the formation of the corresponding pyrimidine base and ribose-1-phosphate. This Staphylococcus haemolyticus (strain JCSC1435) protein is Pyrimidine-nucleoside phosphorylase (pdp).